Consider the following 150-residue polypeptide: D-aminoacyl-tRNA deacylase (150 aa).

Residues 138 to 139 (GP) carry the Gly-cisPro motif, important for rejection of L-amino acids motif.

It belongs to the DTD family. As to quaternary structure, homodimer.

The protein resides in the cytoplasm. The catalysed reaction is glycyl-tRNA(Ala) + H2O = tRNA(Ala) + glycine + H(+). It carries out the reaction a D-aminoacyl-tRNA + H2O = a tRNA + a D-alpha-amino acid + H(+). Its function is as follows. An aminoacyl-tRNA editing enzyme that deacylates mischarged D-aminoacyl-tRNAs. Also deacylates mischarged glycyl-tRNA(Ala), protecting cells against glycine mischarging by AlaRS. Acts via tRNA-based rather than protein-based catalysis; rejects L-amino acids rather than detecting D-amino acids in the active site. By recycling D-aminoacyl-tRNA to D-amino acids and free tRNA molecules, this enzyme counteracts the toxicity associated with the formation of D-aminoacyl-tRNA entities in vivo and helps enforce protein L-homochirality. This chain is D-aminoacyl-tRNA deacylase, found in Akkermansia muciniphila (strain ATCC BAA-835 / DSM 22959 / JCM 33894 / BCRC 81048 / CCUG 64013 / CIP 107961 / Muc).